The sequence spans 425 residues: Phosphomethylpyrimidine synthase (425 aa).

Residues asparagine 66, methionine 95, tyrosine 124, histidine 159, 181–183, 222–225, and glutamate 261 contribute to the substrate site; these read SRG and DAYR. Residue histidine 265 coordinates Zn(2+). Tyrosine 288 contacts substrate. Residue histidine 329 coordinates Zn(2+). 3 residues coordinate [4Fe-4S] cluster: cysteine 406, cysteine 409, and cysteine 413.

It belongs to the ThiC family. [4Fe-4S] cluster is required as a cofactor.

The enzyme catalyses 5-amino-1-(5-phospho-beta-D-ribosyl)imidazole + S-adenosyl-L-methionine = 4-amino-2-methyl-5-(phosphooxymethyl)pyrimidine + CO + 5'-deoxyadenosine + formate + L-methionine + 3 H(+). Its pathway is cofactor biosynthesis; thiamine diphosphate biosynthesis. Catalyzes the synthesis of the hydroxymethylpyrimidine phosphate (HMP-P) moiety of thiamine from aminoimidazole ribotide (AIR) in a radical S-adenosyl-L-methionine (SAM)-dependent reaction. The protein is Phosphomethylpyrimidine synthase of Archaeoglobus fulgidus (strain ATCC 49558 / DSM 4304 / JCM 9628 / NBRC 100126 / VC-16).